The sequence spans 400 residues: uncharacterized protein (400 aa).

36-43 (GSINSGKT) contributes to the ATP binding site.

This sequence belongs to the archaeal ATPase family.

This is an uncharacterized protein from Methanocaldococcus jannaschii (strain ATCC 43067 / DSM 2661 / JAL-1 / JCM 10045 / NBRC 100440) (Methanococcus jannaschii).